A 453-amino-acid chain; its full sequence is Tubulin delta chain (453 aa).

Position 143–149 (143–149 (AGGTGSG)) interacts with GTP.

This sequence belongs to the tubulin family. In terms of assembly, found in a complex with TEDC1, TEDC2, TUBE1 and TUBD1.

It is found in the nucleus. Its subcellular location is the cytoplasm. It localises to the cytoskeleton. The protein resides in the microtubule organizing center. The protein localises to the centrosome. It is found in the centriole. Its subcellular location is the cell projection. It localises to the cilium. In terms of biological role, acts as a positive regulator of hedgehog signaling and regulates ciliary function. This is Tubulin delta chain (TUBD1) from Homo sapiens (Human).